The chain runs to 201 residues: Dermatopontin (201 aa).

A signal peptide spans 1–18; sequence MDLTLLWVLLPLVTTAWG. Position 19 is a pyrrolidone carboxylic acid (Q19). The interval 19–186 is 2 X 53-55 AA tandem repeats; sequence QYGGYGYPYQ…AVERDRQWKF (168 aa). At Y23 the chain carries Sulfotyrosine. A run of 4 repeats spans residues 26 to 79, 70 to 75, 80 to 135, and 125 to 130. Intrachain disulfides connect C50/C77, C90/C132, C106/C133, C139/C196, and C143/C189. Residues 70–186 are 3 X 6 AA tandem repeats of D-R-[EQ]-W-[NQK]-[FY]; sequence DRQWNYACMP…AVERDRQWKF (117 aa). A sulfotyrosine mark is found at Y162, Y164, and Y167. One copy of the 2-3 repeat lies at 181–186; sequence DRQWKF. Residue Y194 is modified to Sulfotyrosine.

The protein belongs to the dermatopontin family. As to quaternary structure, interacts with TGFB1, DCN and collagen. Sulfated on tyrosine residue(s).

The protein resides in the secreted. It is found in the extracellular space. It localises to the extracellular matrix. In terms of biological role, seems to mediate adhesion by cell surface integrin binding. May serve as a communication link between the dermal fibroblast cell surface and its extracellular matrix environment. Enhances TGFB1 activity. Inhibits cell proliferation. Accelerates collagen fibril formation, and stabilizes collagen fibrils against low-temperature dissociation. The sequence is that of Dermatopontin (Dpt) from Mus musculus (Mouse).